A 512-amino-acid chain; its full sequence is MEEFPGYFELDRSRQHDFLYPLIFRESIYALAHDHGLNRNRSTLFENEVDYDKKYSLIIVKRLITRMYQRNHLIISANGSVQNPFWGHNKNLYSKILSEGFAVIVEIPFSLRVLSSFERKEKDIAKSPTLRSIHSIFPFLEDQFSHLDYLSHVLIPYPIHLEIAVQTLRYWVKDASSLHLLRIFLHEYWNSFSTPKKHITLFLKGNSRFFLFLYNSYVCEYESIFLFIRNQSSHFQSTSSGVFFERILFYVKIDHLVEVFVGTDFLDIRSFFKDPNMHYVRYQGKSILASKDTPLLMNKWKYYLVNLWQYHFSVWSQPGRININQLGKYSLDFLGYFSNVQLKSSVVRNQTLENSFLINNAMKKLETTVPILPLIGSLSRAKFCNALGHPISKPTRTDSSDSDIIDRFVRICRNLSHYHSGSSKKKSLYRIKYILRLSCVKTLARKHKSSVRAFLKRLGSELGDEFLTEEGVVLAVIFPKASGRLYRGRIWYLDIPCINDRVGDAEGSIFTK.

It belongs to the intron maturase 2 family. MatK subfamily.

The protein localises to the plastid. The protein resides in the chloroplast. Usually encoded in the trnK tRNA gene intron. Probably assists in splicing its own and other chloroplast group II introns. This Oenothera glazioviana (Large-flowered evening primrose) protein is Maturase K.